The primary structure comprises 285 residues: Acetyl-coenzyme A carboxylase carboxyl transferase subunit beta (285 aa).

The CoA carboxyltransferase N-terminal domain occupies 22–285; the sequence is LWTKCEACGA…HPGVAYAPGV (264 aa). C26, C29, C45, and C48 together coordinate Zn(2+). The C4-type zinc finger occupies 26–48; sequence CEACGAQIYKKEFQENLHVCPKC.

It belongs to the AccD/PCCB family. In terms of assembly, acetyl-CoA carboxylase is a heterohexamer composed of biotin carboxyl carrier protein (AccB), biotin carboxylase (AccC) and two subunits each of ACCase subunit alpha (AccA) and ACCase subunit beta (AccD). The cofactor is Zn(2+).

The protein resides in the cytoplasm. It catalyses the reaction N(6)-carboxybiotinyl-L-lysyl-[protein] + acetyl-CoA = N(6)-biotinyl-L-lysyl-[protein] + malonyl-CoA. It participates in lipid metabolism; malonyl-CoA biosynthesis; malonyl-CoA from acetyl-CoA: step 1/1. In terms of biological role, component of the acetyl coenzyme A carboxylase (ACC) complex. Biotin carboxylase (BC) catalyzes the carboxylation of biotin on its carrier protein (BCCP) and then the CO(2) group is transferred by the transcarboxylase to acetyl-CoA to form malonyl-CoA. The protein is Acetyl-coenzyme A carboxylase carboxyl transferase subunit beta of Thermus thermophilus (strain ATCC 27634 / DSM 579 / HB8).